Reading from the N-terminus, the 205-residue chain is Protein N-terminal glutamine amidohydrolase (205 aa).

Catalysis depends on residues cysteine 20, histidine 74, and aspartate 90.

The protein belongs to the NTAQ1 family. Monomer.

The catalysed reaction is N-terminal L-glutaminyl-[protein] + H2O = N-terminal L-glutamyl-[protein] + NH4(+). Mediates the side-chain deamidation of N-terminal glutamine residues to glutamate, an important step in N-end rule pathway of protein degradation. Conversion of the resulting N-terminal glutamine to glutamate renders the protein susceptible to arginylation, polyubiquitination and degradation as specified by the N-end rule. Does not act on substrates with internal or C-terminal glutamine and does not act on non-glutamine residues in any position. This is Protein N-terminal glutamine amidohydrolase (tun) from Drosophila melanogaster (Fruit fly).